Reading from the N-terminus, the 104-residue chain is Large ribosomal subunit protein uL24 (104 aa).

The protein belongs to the universal ribosomal protein uL24 family. In terms of assembly, part of the 50S ribosomal subunit.

Its function is as follows. One of two assembly initiator proteins, it binds directly to the 5'-end of the 23S rRNA, where it nucleates assembly of the 50S subunit. Functionally, one of the proteins that surrounds the polypeptide exit tunnel on the outside of the subunit. This Idiomarina loihiensis (strain ATCC BAA-735 / DSM 15497 / L2-TR) protein is Large ribosomal subunit protein uL24.